Here is a 415-residue protein sequence, read N- to C-terminus: MAIKKRSATVVPGASGAAAAVKNLQASKSSFWGELPQHVMSGISRMVPTLIMGGVILAFSQLIAYSWLKIPAEIGIMDALNSGKFSGFDLSLLKFAWLSQSFGGVLFGFAIPMFAAFVANSIGGKLAFPAGFIGGLMSTQPTQLLNFDPSTMQWATSSPVPSTFIGALIISIVAGYLVKWMNQKIQLPDFLLAFKTTFLLPILSAIFVMLAMYYVITPFGGWINGGIRTVLTAAGEKGALMYAMGIAAATAIDLGGPINKAAGFVAFSFTTDHVLPVTARSIAIVIPPIGLGLATIIDRRLTGKRLFNAQLYPQGKTAMFLAFMGISEGAIPFALESPITAIPSYMVGAIVGSTAAVWLGAVQWFPESAIWAWPLVTNLGVYMAGIALGAIITALMVVFLRLMMFRKGKLLIDSL.

Over 1-46 (MAIKKRSATVVPGASGAAAAVKNLQASKSSFWGELPQHVMSGISRM) the chain is Cytoplasmic. A PTS EIIC type-2 domain is found at 35-415 (LPQHVMSGIS…RKGKLLIDSL (381 aa)). Residues 47–67 (VPTLIMGGVILAFSQLIAYSW) traverse the membrane as a helical segment. Residues 68-101 (LKIPAEIGIMDALNSGKFSGFDLSLLKFAWLSQS) are Periplasmic-facing. The chain crosses the membrane as a helical span at residues 102–122 (FGGVLFGFAIPMFAAFVANSI). At 123–126 (GGKL) the chain is on the cytoplasmic side. The chain crosses the membrane as a helical span at residues 127-147 (AFPAGFIGGLMSTQPTQLLNF). The Periplasmic portion of the chain corresponds to 148-157 (DPSTMQWATS). The helical transmembrane segment at 158–178 (SPVPSTFIGALIISIVAGYLV) threads the bilayer. Residues 179-197 (KWMNQKIQLPDFLLAFKTT) are Cytoplasmic-facing. Residues 198 to 218 (FLLPILSAIFVMLAMYYVITP) form a helical membrane-spanning segment. The Periplasmic portion of the chain corresponds to 219-237 (FGGWINGGIRTVLTAAGEK). The helical transmembrane segment at 238-258 (GALMYAMGIAAATAIDLGGPI) threads the bilayer. Topologically, residues 259-276 (NKAAGFVAFSFTTDHVLP) are cytoplasmic. Residues 277–297 (VTARSIAIVIPPIGLGLATII) form a helical membrane-spanning segment. The Periplasmic segment spans residues 298-318 (DRRLTGKRLFNAQLYPQGKTA). A helical transmembrane segment spans residues 319 to 339 (MFLAFMGISEGAIPFALESPI). The Cytoplasmic segment spans residues 340-341 (TA). The helical transmembrane segment at 342–362 (IPSYMVGAIVGSTAAVWLGAV) threads the bilayer. At 363–378 (QWFPESAIWAWPLVTN) the chain is on the periplasmic side. A helical transmembrane segment spans residues 379 to 399 (LGVYMAGIALGAIITALMVVF). The Cytoplasmic portion of the chain corresponds to 400-415 (LRLMMFRKGKLLIDSL).

It is found in the cell inner membrane. The phosphoenolpyruvate-dependent sugar phosphotransferase system (PTS), a major carbohydrate active -transport system, catalyzes the phosphorylation of incoming sugar substrates concomitant with their translocation across the cell membrane. This is Fructose-like permease IIC component (fryC) from Shigella flexneri.